The chain runs to 549 residues: Ribosomal protein S6 kinase-like 1 (549 aa).

One can recognise an MIT domain in the interval 87-115 (IHVDPNKERREAVKLKITKYLRRAEEIFN). The Protein kinase domain occupies 145 to 539 (SAVEQLRGCR…VSKLKSHPFF (395 aa)). Residues 151–159 (RGCRVVGVI) and K177 contribute to the ATP site. Positions 260–325 (LTPARLPSGH…SDLPKAPGGH (66 aa)) are disordered. The Proton acceptor role is filled by D412.

This sequence belongs to the protein kinase superfamily. Ser/Thr protein kinase family. S6 kinase subfamily.

The enzyme catalyses L-seryl-[protein] + ATP = O-phospho-L-seryl-[protein] + ADP + H(+). It carries out the reaction L-threonyl-[protein] + ATP = O-phospho-L-threonyl-[protein] + ADP + H(+). This chain is Ribosomal protein S6 kinase-like 1 (RPS6KL1), found in Pongo abelii (Sumatran orangutan).